Consider the following 124-residue polypeptide: Large ribosomal subunit protein bL12 (124 aa).

This sequence belongs to the bacterial ribosomal protein bL12 family. Homodimer. Part of the ribosomal stalk of the 50S ribosomal subunit. Forms a multimeric L10(L12)X complex, where L10 forms an elongated spine to which 2 to 4 L12 dimers bind in a sequential fashion. Binds GTP-bound translation factors.

Its function is as follows. Forms part of the ribosomal stalk which helps the ribosome interact with GTP-bound translation factors. Is thus essential for accurate translation. The sequence is that of Large ribosomal subunit protein bL12 from Cupriavidus taiwanensis (strain DSM 17343 / BCRC 17206 / CCUG 44338 / CIP 107171 / LMG 19424 / R1) (Ralstonia taiwanensis (strain LMG 19424)).